The following is an 858-amino-acid chain: Heat shock protein 105 kDa (858 aa).

At Ser2 the chain carries N-acetylserine. Position 471 is an N6-acetyllysine (Lys471). Disordered regions lie at residues 500-584 and 796-858; these read KVPT…PPEA and CEPV…MDLD. The segment covering 504–514 has biased composition (acidic residues); that stretch reads EENEMSSEADM. Phosphoserine is present on residues Ser509 and Ser510. Over residues 532–554 the composition is skewed to polar residues; the sequence is QQDNSEAGTQPQVQTDAQQTSQS. Ser557 is modified (phosphoserine). Thr561 is modified (phosphothreonine). Basic and acidic residues-rich tracts occupy residues 563–584 and 805–814; these read EENK…PPEA and PKIESPKLER. Ser809 is modified (phosphoserine). Position 815 is a phosphothreonine (Thr815). A compositionally biased stretch (basic and acidic residues) spans 821 to 832; that stretch reads IDKKEEDLEDKN. Polar residues predominate over residues 849 to 858; the sequence is EKNSVNMDLD.

This sequence belongs to the heat shock protein 70 family. In terms of assembly, interacts with HSPA8/HSC70. Interacts with HSPA1A (via NBD) and HSPA1B (via NBD). Phosphorylation on Ser-509 may be important for regulation of the HSPA8/HSC70 chaperone activity.

The protein localises to the cytoplasm. Functionally, acts as a nucleotide-exchange factor (NEF) for chaperone proteins HSPA1A and HSPA1B, promoting the release of ADP from HSPA1A/B thereby triggering substrate release. Prevents the aggregation of denatured proteins in cells under severe stress, on which the ATP levels decrease markedly. Inhibits HSPA8/HSC70 ATPase and chaperone activities. This is Heat shock protein 105 kDa (HSPH1) from Pongo abelii (Sumatran orangutan).